The following is a 485-amino-acid chain: D-alanine--D-alanyl carrier protein ligase (485 aa).

Residue 144–145 coordinates ATP; sequence TS. D189 serves as a coordination point for D-alanine. 284 to 289 contributes to the ATP binding site; it reads NTYGPT. V293 lines the D-alanine pocket. Residues D365 and K473 each contribute to the ATP site. K473 is a binding site for D-alanine.

The protein belongs to the ATP-dependent AMP-binding enzyme family. DltA subfamily.

The protein localises to the cytoplasm. It carries out the reaction holo-[D-alanyl-carrier protein] + D-alanine + ATP = D-alanyl-[D-alanyl-carrier protein] + AMP + diphosphate. Its pathway is cell wall biogenesis; lipoteichoic acid biosynthesis. In terms of biological role, catalyzes the first step in the D-alanylation of lipoteichoic acid (LTA), the activation of D-alanine and its transfer onto the D-alanyl carrier protein (Dcp) DltC. In an ATP-dependent two-step reaction, forms a high energy D-alanyl-AMP intermediate, followed by transfer of the D-alanyl residue as a thiol ester to the phosphopantheinyl prosthetic group of the Dcp. D-alanylation of LTA plays an important role in modulating the properties of the cell wall in Gram-positive bacteria, influencing the net charge of the cell wall. The sequence is that of D-alanine--D-alanyl carrier protein ligase from Staphylococcus haemolyticus (strain JCSC1435).